We begin with the raw amino-acid sequence, 340 residues long: tRNA N6-adenosine threonylcarbamoyltransferase (340 aa).

Residues histidine 109 and histidine 113 each coordinate Fe cation. Substrate is bound by residues 132–136, aspartate 165, glycine 178, and asparagine 277; that span reads AISGA. Aspartate 302 provides a ligand contact to Fe cation.

The protein belongs to the KAE1 / TsaD family. Requires Fe(2+) as cofactor.

It localises to the cytoplasm. The enzyme catalyses L-threonylcarbamoyladenylate + adenosine(37) in tRNA = N(6)-L-threonylcarbamoyladenosine(37) in tRNA + AMP + H(+). Required for the formation of a threonylcarbamoyl group on adenosine at position 37 (t(6)A37) in tRNAs that read codons beginning with adenine. Is involved in the transfer of the threonylcarbamoyl moiety of threonylcarbamoyl-AMP (TC-AMP) to the N6 group of A37, together with TsaE and TsaB. TsaD likely plays a direct catalytic role in this reaction. The sequence is that of tRNA N6-adenosine threonylcarbamoyltransferase from Chlamydia muridarum (strain MoPn / Nigg).